The sequence spans 503 residues: 2-isopropylmalate synthase (503 aa).

The Pyruvate carboxyltransferase domain occupies 4–264 (LYIFDTTLRD…EVSIKTEEIY (261 aa)). Positions 13, 201, 203, and 237 each coordinate Mn(2+). Residues 388 to 503 (KLRHLQVVSG…NQLVMLKGKD (116 aa)) form a regulatory domain region.

This sequence belongs to the alpha-IPM synthase/homocitrate synthase family. LeuA type 1 subfamily. As to quaternary structure, homodimer. The cofactor is Mn(2+).

The protein localises to the cytoplasm. It carries out the reaction 3-methyl-2-oxobutanoate + acetyl-CoA + H2O = (2S)-2-isopropylmalate + CoA + H(+). It functions in the pathway amino-acid biosynthesis; L-leucine biosynthesis; L-leucine from 3-methyl-2-oxobutanoate: step 1/4. In terms of biological role, catalyzes the condensation of the acetyl group of acetyl-CoA with 3-methyl-2-oxobutanoate (2-ketoisovalerate) to form 3-carboxy-3-hydroxy-4-methylpentanoate (2-isopropylmalate). The chain is 2-isopropylmalate synthase from Dictyoglomus turgidum (strain DSM 6724 / Z-1310).